The following is a 262-amino-acid chain: Acyl-coenzyme A diphosphatase FITM2 (262 aa).

Over 1-23 (MEHLERCAWVLRGTLVRSAVRKY) the chain is Cytoplasmic. Residues 24–44 (LPWALAASMLAGSLLKELSPL) traverse the membrane as a helical segment. The Lumenal segment spans residues 45–57 (PESYLSNKRNVLN). Residues 58–78 (VYFVKVAWAWTFCLLLPFIAL) form a helical membrane-spanning segment. The Cytoplasmic portion of the chain corresponds to 79–93 (TNYHLTGKAGLVLRR). The helical transmembrane segment at 94–114 (LSTLLVGTAIWYVCTAIFSNI) threads the bilayer. Over 115–145 (EHYTGSCYQSPALEGERKEHQSKQQCHGEGG) the chain is Lumenal. The helical transmembrane segment at 146–166 (FWHGFDISGHSFLLTFCALMI) threads the bilayer. His155 is an active-site residue. The Cytoplasmic segment spans residues 167 to 190 (VEEMAVLHEVKTDRNHCLHAAITT). The chain crosses the membrane as a helical span at residues 191-211 (LVVALGFLTFIWVWMFLCTAV). The Lumenal portion of the chain corresponds to 212 to 218 (YFHNLSQ). Residue His214 is part of the active site. The helical transmembrane segment at 219–239 (KVFGTLFGLLGWYGTYGCWYL) threads the bilayer. Over 240–262 (KSFSPGLPPQSSSLNLKQDTYKK) the chain is Cytoplasmic.

It belongs to the FIT family. FIT2 subfamily.

It localises to the endoplasmic reticulum membrane. The catalysed reaction is an acyl-CoA + H2O = an acyl-4'-phosphopantetheine + adenosine 3',5'-bisphosphate + 2 H(+). The enzyme catalyses (9Z)-octadecenoyl-CoA + H2O = S-(9Z-octadecenoyl)-4'-phosphopantetheine + adenosine 3',5'-bisphosphate + 2 H(+). It catalyses the reaction (5Z,8Z,11Z,14Z)-eicosatetraenoyl-CoA + H2O = S-(5Z,8Z,11Z,14Z-eicosatetraenoyl)-4'-phosphopantetheine + adenosine 3',5'-bisphosphate + 2 H(+). It carries out the reaction hexadecanoyl-CoA + H2O = S-hexadecanoyl-4'-phosphopantetheine + adenosine 3',5'-bisphosphate + 2 H(+). Functionally, fatty acyl-coenzyme A (CoA) diphosphatase that hydrolyzes fatty acyl-CoA to yield acyl-4'-phosphopantetheine and adenosine 3',5'-bisphosphate. Preferentially hydrolyzes unsaturated long-chain acyl-CoA substrates such as oleoyl-CoA/(9Z)-octadecenoyl-CoA and arachidonoyl-CoA/(5Z,8Z,11Z,14Z)-eicosatetraenoyl-CoA in the endoplasmic reticulum (ER) lumen. This catalytic activity is required for maintaining ER structure and for lipid droplets (LDs) biogenesis, which are lipid storage organelles involved in maintaining lipid and energy homeostasis. Directly binds to diacylglycerol (DAGs) and triacylglycerol, which is also important for LD biogenesis. May support directional budding of nacent LDs from the ER into the cytosol by reducing DAG levels at sites of LD formation. Plays a role in the regulation of cell morphology and cytoskeletal organization. This chain is Acyl-coenzyme A diphosphatase FITM2, found in Bos taurus (Bovine).